A 773-amino-acid polypeptide reads, in one-letter code: 4'-phosphopantetheine phosphatase (773 aa).

An N-acetylalanine modification is found at A2. The tract at residues 2-402 is pantothenate kinase; that stretch reads AECRASGGGS…APELCPTQRA (401 aa). Acetyl-CoA-binding residues include S196 and S199. At Y320 the chain carries 3'-nitrotyrosine. The segment at 403-773 is 4'-phosphopantetheine phosphatase; it reads RSGTFDLLEM…VIFKYEVPAE (371 aa). At S404 the chain carries Phosphoserine. T406 bears the Phosphothreonine mark. 3 residues coordinate Mn(2+): D623, N624, and D659. A Subfamily II EGMGR motif motif is present at residues 724–728; that stretch reads EGMGR.

The protein in the N-terminal section; belongs to the type II pantothenate kinase family. This sequence in the C-terminal section; belongs to the damage-control phosphatase family. Phosphopantetheine phosphatase (II) subfamily. As to quaternary structure, homodimer. Interacts with PKM. It depends on Mn(2+) as a cofactor. The cofactor is Ni(2+).

The protein localises to the cytoplasm. It carries out the reaction (R)-4'-phosphopantetheine + H2O = (R)-pantetheine + phosphate. The enzyme catalyses (R)-4'-phosphopantetheine sulfonate + H2O = (R)-pantetheine sulfonate + phosphate. The catalysed reaction is (R)-4'-phospho-S-sulfopantetheine + H2O = (R)-S-sulfopantetheine + phosphate. Activity is strongly promoted by Co(2+), Ni(2+), Mg(2+) and Mn(2+). Activity is inhibited by EDTA. Phosphatase which shows a preference for 4'-phosphopantetheine and its oxidatively damaged forms (sulfonate or S-sulfonate), providing strong indirect evidence that the phosphatase activity pre-empts damage in the coenzyme A (CoA) pathway. Hydrolyzing excess 4'-phosphopantetheine could constitute a directed overflow mechanism to prevent its oxidation to the S-sulfonate, sulfonate, or other forms. Hydrolyzing 4'-phosphopantetheine sulfonate or S-sulfonate would forestall their conversion to inactive forms of CoA and acyl carrier protein. May play a role in the physiological regulation of CoA intracellular levels. The sequence is that of 4'-phosphopantetheine phosphatase from Rattus norvegicus (Rat).